The sequence spans 488 residues: NADH-quinone oxidoreductase subunit N 2 (488 aa).

14 helical membrane passes run phenylalanine 18–isoleucine 38, leucine 45–proline 65, proline 81–alanine 101, serine 110–alanine 130, leucine 135–leucine 155, tyrosine 169–isoleucine 189, leucine 210–phenylalanine 230, proline 242–valine 262, leucine 274–valine 294, serine 308–methionine 328, valine 331–leucine 351, isoleucine 375–phenylalanine 395, tryptophan 412–valine 434, and phenylalanine 458–isoleucine 478.

This sequence belongs to the complex I subunit 2 family. In terms of assembly, NDH-1 is composed of 14 different subunits. Subunits NuoA, H, J, K, L, M, N constitute the membrane sector of the complex.

It localises to the cell inner membrane. The catalysed reaction is a quinone + NADH + 5 H(+)(in) = a quinol + NAD(+) + 4 H(+)(out). In terms of biological role, NDH-1 shuttles electrons from NADH, via FMN and iron-sulfur (Fe-S) centers, to quinones in the respiratory chain. The immediate electron acceptor for the enzyme in this species is believed to be ubiquinone. Couples the redox reaction to proton translocation (for every two electrons transferred, four hydrogen ions are translocated across the cytoplasmic membrane), and thus conserves the redox energy in a proton gradient. The polypeptide is NADH-quinone oxidoreductase subunit N 2 (Aquifex aeolicus (strain VF5)).